The following is a 232-amino-acid chain: U2 small nuclear ribonucleoprotein B'' (232 aa).

In terms of domain architecture, RRM 1 spans 10–89 (QTVYLRNLNE…KRMRVQYAKT (80 aa)). The interval 90–159 (RSDCLATEDG…QEPPAPPNNI (70 aa)) is disordered. A compositionally biased stretch (basic and acidic residues) spans 108–123 (KKQEEKAAEKKRRAEE). A compositionally biased stretch (polar residues) spans 127 to 151 (SGPNAAAQSNGTGYQASRLGKTSQE). Positions 158-232 (NILFIQNLPA…NPMAISYAKK (75 aa)) constitute an RRM 2 domain.

The protein belongs to the RRM U1 A/B'' family. Component of the spliceosome where it is associated with snRNP U2.

It is found in the nucleus. The protein localises to the cajal body. The protein resides in the nucleoplasm. It localises to the cytoplasm. In terms of biological role, involved in nuclear pre-mRNA splicing. In Oryza sativa subsp. japonica (Rice), this protein is U2 small nuclear ribonucleoprotein B''.